Reading from the N-terminus, the 97-residue chain is Mapk-regulated corepressor-interacting protein 1 (97 aa).

A compositionally biased stretch (polar residues) spans Met-1–Glu-26. Disordered regions lie at residues Met-1–Leu-27 and Gln-54–Ser-97. Composition is skewed to basic and acidic residues over residues Gln-54–Glu-68 and Ser-84–Ser-97. Positions Pro-80–Ser-84 match the PXDLS motif motif.

This sequence belongs to the MCRIP family.

The protein resides in the nucleus. The protein localises to the cytoplasm. It is found in the stress granule. Functionally, may play a role in the regulation of the epithelial-mesenchymal transition. This is Mapk-regulated corepressor-interacting protein 1 (mcrip1) from Danio rerio (Zebrafish).